Consider the following 232-residue polypeptide: LexA repressor (232 aa).

Residues 1 to 25 (MSDDSSDSTSGAGSGRGRDSGLTER) form a disordered region. Positions 16 to 25 (RGRDSGLTER) are enriched in basic and acidic residues. The H-T-H motif DNA-binding region spans 46–66 (IREIGDAVGLTSTSSVAHQLR). Active-site for autocatalytic cleavage activity residues include Ser156 and Lys193.

It belongs to the peptidase S24 family. In terms of assembly, homodimer.

The catalysed reaction is Hydrolysis of Ala-|-Gly bond in repressor LexA.. Represses a number of genes involved in the response to DNA damage (SOS response), including recA and lexA. In the presence of single-stranded DNA, RecA interacts with LexA causing an autocatalytic cleavage which disrupts the DNA-binding part of LexA, leading to derepression of the SOS regulon and eventually DNA repair. In Mycolicibacterium vanbaalenii (strain DSM 7251 / JCM 13017 / BCRC 16820 / KCTC 9966 / NRRL B-24157 / PYR-1) (Mycobacterium vanbaalenii), this protein is LexA repressor.